The chain runs to 773 residues: Beta-D-xylosidase 3 (773 aa).

Positions 1 to 23 are cleaved as a signal peptide; it reads MASRNRALFSVSTLFLCFIVCIS. N-linked (GlcNAc...) asparagine glycosylation is present at Asn-131. Residue Asp-298 is part of the active site. 3 N-linked (GlcNAc...) asparagine glycosylation sites follow: Asn-349, Asn-432, and Asn-770.

Belongs to the glycosyl hydrolase 3 family. As to expression, expressed in flowers and siliques, in the early stage of seed formation and not at seed maturation. Detected exclusively in the endosperm of very young seeds when the embryo is at the globular stage.

The protein localises to the secreted. Its subcellular location is the extracellular space. It localises to the extracellular matrix. The catalysed reaction is Hydrolysis of terminal non-reducing alpha-L-arabinofuranoside residues in alpha-L-arabinosides.. Involved in the hydrolysis of arabinan. Can hydrolyze (1,3)-alpha-, (1,2)-alpha-linked side group residues and non-reducing terminal L-arabinofuranose residues of debranched (1,5)-alpha-L-arabinan backbone. Also acts as a beta-D-xylosidase, releasing D-xylose from arabinoxylan and xylan. This chain is Beta-D-xylosidase 3 (BXL3), found in Arabidopsis thaliana (Mouse-ear cress).